Here is a 762-residue protein sequence, read N- to C-terminus: Semaphorin-4A (762 aa).

A signal peptide spans 1-32 (MALPALGLDSWSFLGLFLFQLLLLFLPPATTA). Over 33-684 (GREGQGPTPR…LAAPKSYWPH (652 aa)) the chain is Extracellular. The region spanning 37-495 (QGPTPRVKYH…FSGGIWKVPR (459 aa)) is the Sema domain. C114 and C125 are joined by a disulfide. N-linked (GlcNAc...) asparagine glycosylation is found at N121 and N136. Intrachain disulfides connect C143-C152, C270-C380, and C294-C340. 2 N-linked (GlcNAc...) asparagine glycosylation sites follow: N314 and N497. The 48-residue stretch at 497-544 (NCSVYESCMDCVLARDPHCAWDPESQTCRLLPTPILKSWKQDMQQGNP) folds into the PSI domain. Disulfide bonds link C498–C515 and C507–C524. Residues 574–632 (NSILELPCPQSSALASYHWSHGVEAIPEAPSTVYNGSLLLLLRDGAGGLYQCWATENDF) form the Ig-like C2-type domain. An N-linked (GlcNAc...) asparagine glycan is attached at N608. A helical transmembrane segment spans residues 685–705 (FLTVTVLLALVLSGALVTFLV). The Cytoplasmic portion of the chain corresponds to 706 to 762 (SPLGALRARGKVQGCGTLPSREKAPLSSEQCLQPSKEGRTSASDMDADNNLQGTEVA). Residues 722–762 (TLPSREKAPLSSEQCLQPSKEGRTSASDMDADNNLQGTEVA) are disordered.

The protein belongs to the semaphorin family. Interacts with PLXNB1, PLXNB2, PLXNB3, PLXND1 and TIMD2.

It localises to the cell membrane. Its function is as follows. Cell surface receptor for PLXNB1, PLXNB2, PLXNB3 and PLXND1 that plays an important role in cell-cell signaling. Regulates glutamatergic and GABAergic synapse development. Promotes the development of inhibitory synapses in a PLXNB1-dependent manner and promotes the development of excitatory synapses in a PLXNB2-dependent manner. Plays a role in priming antigen-specific T-cells, promotes differentiation of Th1 T-helper cells, and thereby contributes to adaptive immunity. Promotes phosphorylation of TIMD2. Inhibits angiogenesis. Promotes axon growth cone collapse. Inhibits axonal extension by providing local signals to specify territories inaccessible for growing axons. This Bos taurus (Bovine) protein is Semaphorin-4A (SEMA4A).